Consider the following 389-residue polypeptide: Ethanolamine-phosphate cytidylyltransferase (389 aa).

The disordered stretch occupies residues 1–20 (MIRNGRGAAGGAEQPGPGGR). Residues 221–222 (AF), 229–232 (HVDF), Lys259, 307–310 (HGKT), and 336–340 (SGSNL) each bind CTP. Ser338 carries the phosphoserine modification. A phosphothreonine mark is found at Thr341 and Thr342.

It belongs to the cytidylyltransferase family. In terms of tissue distribution, strongest expression in liver, heart, and skeletal muscle.

It catalyses the reaction phosphoethanolamine + CTP + H(+) = CDP-ethanolamine + diphosphate. Its pathway is phospholipid metabolism; phosphatidylethanolamine biosynthesis; phosphatidylethanolamine from ethanolamine: step 2/3. Its function is as follows. Ethanolamine-phosphate cytidylyltransferase that catalyzes the second step in the synthesis of phosphatidylethanolamine (PE) from ethanolamine via the CDP-ethanolamine pathway. Phosphatidylethanolamine is a dominant inner-leaflet phospholipid in cell membranes, where it plays a role in membrane function by structurally stabilizing membrane-anchored proteins, and participates in important cellular processes such as cell division, cell fusion, blood coagulation, and apoptosis. The polypeptide is Ethanolamine-phosphate cytidylyltransferase (PCYT2) (Homo sapiens (Human)).